A 258-amino-acid chain; its full sequence is RIO-type serine/threonine-protein kinase Rio1 (258 aa).

In terms of domain architecture, Protein kinase spans 49–258 (TAMGGVISTG…EEMLKEVKGE (210 aa)). ATP is bound by residues 55-63 (ISTGKEANV) and K80. S108 carries the post-translational modification Phosphoserine; by autocatalysis. The ATP site is built by E148 and I150. The active-site Proton acceptor is D196. Positions 200, 201, and 212 each coordinate ATP. Mg(2+)-binding residues include N201 and D212. The active-site 4-aspartylphosphate intermediate is D212.

The protein belongs to the protein kinase superfamily. RIO-type Ser/Thr kinase family. It depends on Mg(2+) as a cofactor.

The catalysed reaction is L-seryl-[protein] + ATP = O-phospho-L-seryl-[protein] + ADP + H(+). The enzyme catalyses L-threonyl-[protein] + ATP = O-phospho-L-threonyl-[protein] + ADP + H(+). Autophosphorylation of the rio1 protein is not necessary for maintenance of kinase activity. Prefers ATP over GTP. The yeast ortholog is involved in ribosome biogenesis. Despite the protein kinase domain is proposed to act predominantly as an ATPase. The polypeptide is RIO-type serine/threonine-protein kinase Rio1 (rio1) (Archaeoglobus fulgidus (strain ATCC 49558 / DSM 4304 / JCM 9628 / NBRC 100126 / VC-16)).